The primary structure comprises 130 residues: Small ribosomal subunit protein uS8 (130 aa).

This sequence belongs to the universal ribosomal protein uS8 family. As to quaternary structure, part of the 30S ribosomal subunit. Contacts proteins S5 and S12.

Functionally, one of the primary rRNA binding proteins, it binds directly to 16S rRNA central domain where it helps coordinate assembly of the platform of the 30S subunit. This Edwardsiella ictaluri (strain 93-146) protein is Small ribosomal subunit protein uS8.